The sequence spans 135 residues: Protein NrdI (135 aa).

Belongs to the NrdI family.

Probably involved in ribonucleotide reductase function. The sequence is that of Protein NrdI from Salmonella gallinarum (strain 287/91 / NCTC 13346).